A 420-amino-acid polypeptide reads, in one-letter code: Serine/threonine transporter SstT (420 aa).

The next 9 helical transmembrane spans lie at 14–34 (IMIGIVIGTTLGFLVPEWTFI), 40–60 (LFVGALKAIAPILVFVLIIAS), 71–91 (YVGSILVVYLLATFLAAVVAV), 172–192 (ITTVVQMIIGIAPIGILGLVF), 210–230 (LLLLIGTMAVVALVVYPAIVF), 283–303 (IPLGATINMGGAAITITIMTL), 309–329 (LGMSVPIYLALLLSIIAAVSA), 332–352 (ASGIAGGSLLLIPLACSLFGI), and 356–376 (IAMQVVGVGFIVGVVQDSIET).

The protein belongs to the dicarboxylate/amino acid:cation symporter (DAACS) (TC 2.A.23) family.

Its subcellular location is the cell membrane. It catalyses the reaction L-serine(in) + Na(+)(in) = L-serine(out) + Na(+)(out). The enzyme catalyses L-threonine(in) + Na(+)(in) = L-threonine(out) + Na(+)(out). Involved in the import of serine and threonine into the cell, with the concomitant import of sodium (symport system). The polypeptide is Serine/threonine transporter SstT (Enterococcus faecalis (strain ATCC 700802 / V583)).